The chain runs to 198 residues: Ribonuclease HII (198 aa).

The 189-residue stretch at 10–198 (QLVAGVDEVG…PVKRALGLAS (189 aa)) folds into the RNase H type-2 domain. Asp16, Glu17, and Asp108 together coordinate a divalent metal cation.

This sequence belongs to the RNase HII family. The cofactor is Mn(2+). Requires Mg(2+) as cofactor.

It is found in the cytoplasm. It carries out the reaction Endonucleolytic cleavage to 5'-phosphomonoester.. Endonuclease that specifically degrades the RNA of RNA-DNA hybrids. In Shigella dysenteriae serotype 1 (strain Sd197), this protein is Ribonuclease HII.